Here is an 800-residue protein sequence, read N- to C-terminus: Calmodulin-sensitive adenylate cyclase (800 aa).

Positions Met1–Ala33 are cleaved as a signal peptide. The ATLF-like domain maps to Lys60–Lys273. The interval Asp294–Asn349 is catalytic CA1. The segment at Val350–Thr489 is catalytic CB. Residue His351 is the Proton acceptor of the active site. The tract at residues Ala490–Lys622 is catalytic CA2. Residues Asp491 and Asp493 each contribute to the Mg(2+) site. 3',5'-cyclic AMP contacts are provided by residues Thr548 and His577–Thr579. His577 provides a ligand contact to Mg(2+). Residues Asp623–Lys800 are interaction with calmodulin.

The protein belongs to the adenylyl cyclase class-2 family. As to quaternary structure, interacts (via ATLF domain) with the cleaved form of protective antigen (PA-63) anthrax toxin; interaction is required for EF translocation into the host cytoplasm. Requires Ca(2+) as cofactor.

It is found in the secreted. Its subcellular location is the host cytoplasm. The protein localises to the host cytosol. The enzyme catalyses ATP = 3',5'-cyclic AMP + diphosphate. With respect to regulation, host calmodulin is an absolute requirement for its activation. Inhibited by ethyl 5-aminopyrazolo[1,5-a]quinazoline-3-carboxylate. Edema factor (EF), which constitutes one of the three proteins composing the anthrax toxin, causes edema in the host. Acts as a calmodulin-dependent adenylyl cyclase by converting ATP to cAMP, leading to dramatic elevation of intracellular cAMP levels in the host, thereby causing edema. EF is not toxic by itself and only acts as an edema factor when associated with protective antigen (PA) to form the edema toxin (EdTx). Required for the survival of germinated spores within macrophages at the early stages of infection. This chain is Calmodulin-sensitive adenylate cyclase (cya), found in Bacillus anthracis.